A 462-amino-acid chain; its full sequence is Integrator complex subunit 12 (462 aa).

The disordered stretch occupies residues 39–132; sequence LARGIDSSYR…PETRSSPITV (94 aa). Residues 59 to 86 are compositionally biased toward polar residues; the sequence is ISSTKTVSVKQEPKTSSSLPSGNNNGKV. A Glycyl lysine isopeptide (Lys-Gly) (interchain with G-Cter in SUMO2) cross-link involves residue lysine 68. The span at 88–125 shows a compositional bias: basic and acidic residues; sequence TTEKVKKEGEKRPADKMKSDITEGADVPKKPRLEKPET. At serine 128 the chain carries Phosphoserine. Residues 159–215 form a PHD-type zinc finger; that stretch reads GLACVVCRQMTVASGNQLVECQECHNLYHQDCHKPQVTDKEVTDPRLVWYCARCTRQ. A Glycyl lysine isopeptide (Lys-Gly) (interchain with G-Cter in SUMO2) cross-link involves residue lysine 254. Positions 305 to 328 are enriched in polar residues; sequence PSTAKLSSAAQNNSGKPATSSANQ. Positions 305–462 are disordered; that stretch reads PSTAKLSSAA…KKAAQKKLKK (158 aa). Low complexity-rich tracts occupy residues 347-358 and 382-431; these read KIGSSNSTSPTV and VSKV…PSAS. Residues 434–443 are compositionally biased toward polar residues; sequence GPTSQESQLN. Residues 449–462 are compositionally biased toward basic residues; it reads QMVKKKAAQKKLKK.

This sequence belongs to the Integrator subunit 12 family. In terms of assembly, component of the Integrator complex, composed of core subunits INTS1, INTS2, INTS3, INTS4, INTS5, INTS6, INTS7, INTS8, INTS9/RC74, INTS10, INTS11/CPSF3L, INTS12, INTS13, INTS14 and INTS15. The core complex associates with protein phosphatase 2A subunits PPP2CA and PPP2R1A, to form the Integrator-PP2A (INTAC) complex. Dephosphorylated at Ser-128 by the PNUTS-PP1 complex, promoting RNA polymerase II transcription pause-release.

It localises to the nucleus. Its function is as follows. Component of the integrator complex, a multiprotein complex that terminates RNA polymerase II (Pol II) transcription in the promoter-proximal region of genes. The integrator complex provides a quality checkpoint during transcription elongation by driving premature transcription termination of transcripts that are unfavorably configured for transcriptional elongation: the complex terminates transcription by (1) catalyzing dephosphorylation of the C-terminal domain (CTD) of Pol II subunit POLR2A/RPB1 and SUPT5H/SPT5, (2) degrading the exiting nascent RNA transcript via endonuclease activity and (3) promoting the release of Pol II from bound DNA. The integrator complex is also involved in terminating the synthesis of non-coding Pol II transcripts, such as enhancer RNAs (eRNAs), small nuclear RNAs (snRNAs), telomerase RNAs and long non-coding RNAs (lncRNAs). Mediates recruitment of cytoplasmic dynein to the nuclear envelope, probably as component of the integrator complex. This Bos taurus (Bovine) protein is Integrator complex subunit 12 (INTS12).